Consider the following 396-residue polypeptide: Carbamoyl phosphate synthase small chain (396 aa).

The tract at residues 1–204 (MTQHDNDPAW…WDKGFGQQDK (204 aa)) is CPSase. Positions 59, 256, and 258 each coordinate L-glutamine. One can recognise a Glutamine amidotransferase type-1 domain in the interval 208-396 (NVVAIDYGIK…AELMRQKKSA (189 aa)). The active-site Nucleophile is cysteine 285. 5 residues coordinate L-glutamine: leucine 286, glutamine 289, asparagine 327, glycine 329, and phenylalanine 330. Residues histidine 369 and glutamate 371 contribute to the active site.

It belongs to the CarA family. Composed of two chains; the small (or glutamine) chain promotes the hydrolysis of glutamine to ammonia, which is used by the large (or ammonia) chain to synthesize carbamoyl phosphate. Tetramer of heterodimers (alpha,beta)4.

It carries out the reaction hydrogencarbonate + L-glutamine + 2 ATP + H2O = carbamoyl phosphate + L-glutamate + 2 ADP + phosphate + 2 H(+). The enzyme catalyses L-glutamine + H2O = L-glutamate + NH4(+). The protein operates within amino-acid biosynthesis; L-arginine biosynthesis; carbamoyl phosphate from bicarbonate: step 1/1. It participates in pyrimidine metabolism; UMP biosynthesis via de novo pathway; (S)-dihydroorotate from bicarbonate: step 1/3. Its function is as follows. Small subunit of the glutamine-dependent carbamoyl phosphate synthetase (CPSase). CPSase catalyzes the formation of carbamoyl phosphate from the ammonia moiety of glutamine, carbonate, and phosphate donated by ATP, constituting the first step of 2 biosynthetic pathways, one leading to arginine and/or urea and the other to pyrimidine nucleotides. The small subunit (glutamine amidotransferase) binds and cleaves glutamine to supply the large subunit with the substrate ammonia. This is Carbamoyl phosphate synthase small chain from Bradyrhizobium diazoefficiens (strain JCM 10833 / BCRC 13528 / IAM 13628 / NBRC 14792 / USDA 110).